The following is a 491-amino-acid chain: GTPase Der (491 aa).

The region spanning 3-178 is the EngA-type G 1 domain; sequence AKIALVGRPN…EMRDLLPEED (176 aa). GTP contacts are provided by residues 9–16, 57–61, and 130–133; these read GRPNVGKS, DTGGI, and NKVD. Positions 198–224 are enriched in acidic residues; that stretch reads DAETEDGASASETEEDITEETVEDEPE. A disordered region spans residues 198 to 225; the sequence is DAETEDGASASETEEDITEETVEDEPEA. The region spanning 227–400 is the EngA-type G 2 domain; the sequence is LRLCMLGRPN…LAARIRRECS (174 aa). Residues 233-240, 280-284, and 345-348 contribute to the GTP site; these read GRPNAGKS, DTAGV, and NKMD. The KH-like domain maps to 401-485; that stretch reads VRIPTGQLNR…PMRVHFRSSH (85 aa).

It belongs to the TRAFAC class TrmE-Era-EngA-EngB-Septin-like GTPase superfamily. EngA (Der) GTPase family. As to quaternary structure, associates with the 50S ribosomal subunit.

Its function is as follows. GTPase that plays an essential role in the late steps of ribosome biogenesis. This Nitratidesulfovibrio vulgaris (strain ATCC 29579 / DSM 644 / CCUG 34227 / NCIMB 8303 / VKM B-1760 / Hildenborough) (Desulfovibrio vulgaris) protein is GTPase Der.